The primary structure comprises 156 residues: ATP synthase subunit b (156 aa).

The chain crosses the membrane as a helical span at residues 7–27 (LIGQLIAFALFVAFCMKFVWP).

The protein belongs to the ATPase B chain family. As to quaternary structure, F-type ATPases have 2 components, F(1) - the catalytic core - and F(0) - the membrane proton channel. F(1) has five subunits: alpha(3), beta(3), gamma(1), delta(1), epsilon(1). F(0) has three main subunits: a(1), b(2) and c(10-14). The alpha and beta chains form an alternating ring which encloses part of the gamma chain. F(1) is attached to F(0) by a central stalk formed by the gamma and epsilon chains, while a peripheral stalk is formed by the delta and b chains.

The protein resides in the cell inner membrane. F(1)F(0) ATP synthase produces ATP from ADP in the presence of a proton or sodium gradient. F-type ATPases consist of two structural domains, F(1) containing the extramembraneous catalytic core and F(0) containing the membrane proton channel, linked together by a central stalk and a peripheral stalk. During catalysis, ATP synthesis in the catalytic domain of F(1) is coupled via a rotary mechanism of the central stalk subunits to proton translocation. Functionally, component of the F(0) channel, it forms part of the peripheral stalk, linking F(1) to F(0). The polypeptide is ATP synthase subunit b (Actinobacillus pleuropneumoniae serotype 7 (strain AP76)).